A 449-amino-acid chain; its full sequence is UDP-N-acetylmuramoylalanine--D-glutamate ligase (449 aa).

Position 118–124 (118–124) interacts with ATP; the sequence is GTNGKTT.

This sequence belongs to the MurCDEF family.

Its subcellular location is the cytoplasm. It carries out the reaction UDP-N-acetyl-alpha-D-muramoyl-L-alanine + D-glutamate + ATP = UDP-N-acetyl-alpha-D-muramoyl-L-alanyl-D-glutamate + ADP + phosphate + H(+). The protein operates within cell wall biogenesis; peptidoglycan biosynthesis. Cell wall formation. Catalyzes the addition of glutamate to the nucleotide precursor UDP-N-acetylmuramoyl-L-alanine (UMA). This is UDP-N-acetylmuramoylalanine--D-glutamate ligase from Staphylococcus aureus (strain MRSA252).